We begin with the raw amino-acid sequence, 428 residues long: Ammonium transporter AmtB (428 aa).

The first 22 residues, 1–22, serve as a signal peptide directing secretion; it reads MKIATIKTGLASLAMLPGLVMA. The Periplasmic portion of the chain corresponds to 23-32; the sequence is APAVADKADN. Residues 33–54 form a helical membrane-spanning segment; it reads AFMMICTALVLFMTIPGIALFY. At 55-65 the chain is on the cytoplasmic side; sequence GGLIRGKNVLS. Residues 66–90 traverse the membrane as a helical segment; that stretch reads MLTQVTVTFALVCILWVVYGYSLAF. The Periplasmic portion of the chain corresponds to 91-119; sequence GEGNNFFGNINWLMLKNIELTAVMGSIYQ. The chain crosses the membrane as a helical span at residues 120-142; it reads YIHVAFQGSFACITVGLIVGALA. Topologically, residues 143–146 are cytoplasmic; sequence ERIR. The helical transmembrane segment at 147–171 threads the bilayer; it reads FSAVLIFVVVWLTLSYIPIAHMVWG. Residues 172 to 185 lie on the Periplasmic side of the membrane; sequence GGLLASHGALDFAG. A helical transmembrane segment spans residues 186-201; the sequence is GTVVHINAAIAGLVGA. Residues 202-221 lie on the Cytoplasmic side of the membrane; sequence YLIGKRVGFGKEAFKPHNLP. Residues 222–241 form a helical membrane-spanning segment; it reads MVFTGTAILYIGWFGFNAGS. Ser241 lines the NH4(+) pocket. Residues 242-248 lie on the Periplasmic side of the membrane; the sequence is AGTANEI. Residues 249–273 traverse the membrane as a helical segment; that stretch reads AALAFVNTVVATAAAILGWIFGEWA. The Cytoplasmic portion of the chain corresponds to 274–279; the sequence is LRGKPS. Residues 280–300 form a helical membrane-spanning segment; sequence LLGACSGAIAGLVGVTPACGY. The Periplasmic portion of the chain corresponds to 301 to 302; that stretch reads IG. The chain crosses the membrane as a helical span at residues 303-321; it reads VGGALIIGVVAGLAGLWGV. The Cytoplasmic segment spans residues 322–333; that stretch reads TMLKRLLRVDDP. Residues 334–355 traverse the membrane as a helical segment; the sequence is CDVFGVHGVCGIVGCIMTGIFA. Residues 356–370 are Periplasmic-facing; sequence ASSLGGVGFAEGVTM. Residues 371–399 traverse the membrane as a helical segment; sequence GHQLLVQLESIAITIVWSGVVAFIGYKLA. Topologically, residues 400-428 are cytoplasmic; the sequence is DLTVGLRVPEEQEREGLDVNSHGENAYNA.

This sequence belongs to the ammonia transporter channel (TC 1.A.11.2) family. As to quaternary structure, homotrimer. In response to elevation of the extracellular ammonium concentration, interacts and forms a complex with GlnK.

The protein resides in the cell inner membrane. In the presence of high extracellular ammonium concentrations, transport activity is inhibited by interaction with the regulatory protein GlnK. Formation of the GlnK-AmtB complex is influenced by intracellular pools of the effector molecules ATP, ADP, Mg(2+) and 2-oxoglutarate. The GlnK-AmtB interaction is also controlled by the level of intracellular glutamine and the uridylylation status of GlnK. Its function is as follows. Involved in the uptake of ammonium/ammonia (NH(4)(+)/NH(3)). Transport is electrogenic. Following sequestration of NH(4)(+) at the periplasmic face, NH(4)(+) is deprotonated and neutral NH(3) is transported into the cytoplasm. Neutral NH(3) and charged H(+) are carried separately across the membrane on a unique two-lane pathway, before recombining to NH(4)(+) inside the cell. The protein is Ammonium transporter AmtB (amtB) of Escherichia coli O157:H7.